Reading from the N-terminus, the 29-residue chain is Dermaseptin-1.2TR (29 aa).

Val-29 is subject to Valine amide.

Expressed by the skin glands.

The protein localises to the secreted. Its function is as follows. Has antimicrobial activity. The chain is Dermaseptin-1.2TR from Phyllomedusa trinitatis (Trinidad leaf frog).